Consider the following 244-residue polypeptide: 1-(5-phosphoribosyl)-5-[(5-phosphoribosylamino)methylideneamino] imidazole-4-carboxamide isomerase (244 aa).

Aspartate 10 serves as the catalytic Proton acceptor. Catalysis depends on aspartate 129, which acts as the Proton donor.

Belongs to the HisA/HisF family.

It localises to the cytoplasm. It carries out the reaction 1-(5-phospho-beta-D-ribosyl)-5-[(5-phospho-beta-D-ribosylamino)methylideneamino]imidazole-4-carboxamide = 5-[(5-phospho-1-deoxy-D-ribulos-1-ylimino)methylamino]-1-(5-phospho-beta-D-ribosyl)imidazole-4-carboxamide. It functions in the pathway amino-acid biosynthesis; L-histidine biosynthesis; L-histidine from 5-phospho-alpha-D-ribose 1-diphosphate: step 4/9. This chain is 1-(5-phosphoribosyl)-5-[(5-phosphoribosylamino)methylideneamino] imidazole-4-carboxamide isomerase, found in Rhodococcus opacus (strain B4).